Consider the following 87-residue polypeptide: Transcription factor ILI4 (87 aa).

Residues 1-54 enclose the bHLH domain; that stretch reads MSSRRSSRSSVSEEEINELISKLQSLLPSSRRRGANQASTTKLLKETCSYIKSL.

The protein belongs to the bHLH protein family. Interacts with LO9-177. In terms of tissue distribution, expressed in phloem of leaf blades and sheaths, lamina joints, filaments before anthesis, vasculare bundles of the ovule, lemma and palea, and embryos.

The protein localises to the cytoplasm. In terms of biological role, atypical and probable non DNA-binding bHLH transcription factor that acts as a positive regulator of brassinosteroid (BR) response. Controls lamina inclination by participating in two BR signaling pathways involving BRI1 and RGA1. Involved in the RLI1-dependent modulation of leaf inclination by promoting lamina joint cell elongation, especially in response to phosphate (Pi) availability. This Oryza sativa subsp. japonica (Rice) protein is Transcription factor ILI4 (ILI4).